A 347-amino-acid chain; its full sequence is Nod factor export ATP-binding protein I (347 aa).

The span at 1 to 11 (MGENMEREMLR) shows a compositional bias: basic and acidic residues. Positions 1 to 32 (MGENMEREMLRPKTIAMDQNSASARSNPEREI) are disordered. A compositionally biased stretch (polar residues) spans 17–26 (MDQNSASARS). Residues 49–279 (IDLQAVTMIY…IIGCPVIEVY (231 aa)) enclose the ABC transporter domain. Residue 81–88 (GPNGAGKS) participates in ATP binding.

The protein belongs to the ABC transporter superfamily. Lipooligosaccharide exporter (TC 3.A.1.102) family. The complex is composed of two ATP-binding proteins (NodI) and two transmembrane proteins (NodJ).

Its subcellular location is the cell inner membrane. Functionally, part of the ABC transporter complex NodIJ involved in the export of the nodulation factors (Nod factors), the bacterial signal molecules that induce symbiosis and subsequent nodulation induction. Nod factors are LCO (lipo-chitin oligosaccharide), a modified beta-1,4-linked N-acetylglucosamine oligosaccharide. This subunit is responsible for energy coupling to the transport system. This Neorhizobium galegae (Rhizobium galegae) protein is Nod factor export ATP-binding protein I.